The primary structure comprises 130 residues: Small ribosomal subunit protein uS11 (130 aa).

This sequence belongs to the universal ribosomal protein uS11 family. Part of the 30S ribosomal subunit. Interacts with proteins S7 and S18. Binds to IF-3.

In terms of biological role, located on the platform of the 30S subunit, it bridges several disparate RNA helices of the 16S rRNA. Forms part of the Shine-Dalgarno cleft in the 70S ribosome. This Campylobacter curvus (strain 525.92) protein is Small ribosomal subunit protein uS11.